We begin with the raw amino-acid sequence, 91 residues long: DNA-directed RNA polymerase subunit Rpo11 (91 aa).

It belongs to the archaeal Rpo11/eukaryotic RPB11/RPC19 RNA polymerase subunit family. As to quaternary structure, part of the RNA polymerase complex.

Its subcellular location is the cytoplasm. It carries out the reaction RNA(n) + a ribonucleoside 5'-triphosphate = RNA(n+1) + diphosphate. In terms of biological role, DNA-dependent RNA polymerase (RNAP) catalyzes the transcription of DNA into RNA using the four ribonucleoside triphosphates as substrates. The polypeptide is DNA-directed RNA polymerase subunit Rpo11 (Methanothrix thermoacetophila (strain DSM 6194 / JCM 14653 / NBRC 101360 / PT) (Methanosaeta thermophila)).